Consider the following 527-residue polypeptide: Type II methyltransferase M.XamI (527 aa).

It belongs to the N(4)/N(6)-methyltransferase family.

It carries out the reaction a 2'-deoxyadenosine in DNA + S-adenosyl-L-methionine = an N(6)-methyl-2'-deoxyadenosine in DNA + S-adenosyl-L-homocysteine + H(+). A gamma subtype methylase that recognizes the double-stranded sequence 5'-GTCGAC-3', possibly methylates A-5 on both strands, and protects the DNA from cleavage by the XamI endonuclease. The protein is Type II methyltransferase M.XamI of Xanthomonas campestris pv. amaranthicola.